Reading from the N-terminus, the 79-residue chain is Cell division protein ZapB (79 aa).

Positions 4–78 (EVFEKLESKV…LRALLGKMEE (75 aa)) form a coiled coil.

This sequence belongs to the ZapB family. Homodimer. The ends of the coiled-coil dimer bind to each other, forming polymers. Interacts with FtsZ.

It is found in the cytoplasm. Functionally, non-essential, abundant cell division factor that is required for proper Z-ring formation. It is recruited early to the divisome by direct interaction with FtsZ, stimulating Z-ring assembly and thereby promoting cell division earlier in the cell cycle. Its recruitment to the Z-ring requires functional FtsA or ZipA. This chain is Cell division protein ZapB, found in Serratia proteamaculans (strain 568).